A 293-amino-acid chain; its full sequence is Glutamyl-Q tRNA(Asp) synthetase (293 aa).

Residues 8–12 and glutamate 44 each bind L-glutamate; that span reads RFAPT. The short motif at 11-21 is the 'HIGH' region element; that stretch reads PTPSGYLHFGS. Residues cysteine 100, cysteine 102, tyrosine 114, and cysteine 118 each contribute to the Zn(2+) site. Positions 171 and 189 each coordinate L-glutamate. A 'KMSKS' region motif is present at residues 227 to 231; sequence KLGKS. Residue lysine 230 participates in ATP binding.

The protein belongs to the class-I aminoacyl-tRNA synthetase family. GluQ subfamily. Zn(2+) serves as cofactor.

Functionally, catalyzes the tRNA-independent activation of glutamate in presence of ATP and the subsequent transfer of glutamate onto a tRNA(Asp). Glutamate is transferred on the 2-amino-5-(4,5-dihydroxy-2-cyclopenten-1-yl) moiety of the queuosine in the wobble position of the QUC anticodon. The chain is Glutamyl-Q tRNA(Asp) synthetase from Pseudomonas paraeruginosa (strain DSM 24068 / PA7) (Pseudomonas aeruginosa (strain PA7)).